Here is a 283-residue protein sequence, read N- to C-terminus: Chromatin modification-related protein png1 (283 aa).

Residues 137–171 (YSPSGASSARQTPAPSRSGASTAGRRRTSATTRGA) show a composition bias toward low complexity. Residues 137-224 (YSPSGASSAR…NEMVSEEDME (88 aa)) form a disordered region. Residues 181–216 (YTASLADSGSTRGQKVSNATATTQLETKADSTTPNE) are compositionally biased toward polar residues. The PHD-type zinc finger occupies 228–277 (EKYCFCQQGSYGQMVACDNANCEREWFHMECVGLKAPPEGTWYCEACRDQ). C231, C233, C244, C249, H255, C258, C271, and C274 together coordinate Zn(2+).

This sequence belongs to the ING family. In terms of assembly, interacts with H3K4me3 and to a lesser extent with H3K4me2. Component of a histone deacetylase complex.

Its subcellular location is the nucleus. In terms of biological role, component of a histone deacetylase complex responsible for the deacetylation of lysine residues on the N-terminal part of the core histones (H2A, H2B, H3 and H4). Histone deacetylation gives a tag for epigenetic repression and plays an important role in transcriptional regulation, cell cycle progression and developmental events. Has a role in silencing of mating type genes. This Schizosaccharomyces pombe (strain 972 / ATCC 24843) (Fission yeast) protein is Chromatin modification-related protein png1 (png1).